A 487-amino-acid polypeptide reads, in one-letter code: N-succinylglutamate 5-semialdehyde dehydrogenase (487 aa).

221–226 (GSSRTG) provides a ligand contact to NAD(+). Active-site residues include E244 and C278.

The protein belongs to the aldehyde dehydrogenase family. AstD subfamily.

The catalysed reaction is N-succinyl-L-glutamate 5-semialdehyde + NAD(+) + H2O = N-succinyl-L-glutamate + NADH + 2 H(+). It functions in the pathway amino-acid degradation; L-arginine degradation via AST pathway; L-glutamate and succinate from L-arginine: step 4/5. In terms of biological role, catalyzes the NAD-dependent reduction of succinylglutamate semialdehyde into succinylglutamate. The protein is N-succinylglutamate 5-semialdehyde dehydrogenase of Pseudomonas putida (strain GB-1).